The chain runs to 371 residues: Trans-enoyl reductase calK (371 aa).

An NADP(+)-binding site is contributed by Asn51–Lys54. Substrate is bound at residue Trp145 to Phe152. NADP(+) contacts are provided by residues Gly181 to Ser184, Ser204 to Ser207, Tyr222, and Leu269 to Glu270. Gly289 to Leu293 lines the substrate pocket. Residue Val359–Arg360 participates in NADP(+) binding.

This sequence belongs to the zinc-containing alcohol dehydrogenase family. In terms of assembly, monomer.

Its pathway is secondary metabolite biosynthesis. In terms of biological role, trans-enoyl reductase; part of the gene cluster that mediates the biosynthesis of calbistrin A and related compounds. Calbistrin A is a secondary metabolite with an interesting structure that was recently found to have bioactivity against leukemia cells. It consists of two polyketides linked by an ester bond: a bicyclic decalin containing polyketide and a linear 12 carbon dioic acid structure. The polyketide synthase calA is probably responsible for forming the decalin moiety. Because calA lacks a designated enoylreductase (ER) domain, the required activity is provided by the trans-enoyl reductase calK. Following release from the PKS, calF then probably catalyzes the oxidation and the subsequent Diels Alder cycloisomerization that lead to the formation of the decalin moiety. The decalin polyketide backbone includes two C-methyl groups, at C7 and C11 in backbone, of which the C7 position is probably methylated by the methyltransferase domain of calA. A candidate for adding the methyl group at C11, if not done by CalA, is the cluster methyltransferase calH. Several additional tailoring enzymes within the cluster could be involved in the modification of the decalin polyketide product. Those include the 3 cytochrome P450 monooxygenases CalE, CalG and CalL, of which one might be responsible for the introduction of the extra hydroxyl group attached to the backbone of the decalin moiety, at position C9 in the backbone, that allows for attachment of the linear moiety. One tailoring enzyme activity that is expected to be involved in biosynthesis of calbistrin is an acyltransferase for connecting the two polyketide synthase products, and which could be performed by the cluster acyltransferase calJ. The enzyme responsible for the biosynthesis of the linear moiety, probably a second PKS, has not been identified yet. The chain is Trans-enoyl reductase calK from Penicillium decumbens.